A 179-amino-acid polypeptide reads, in one-letter code: Large ribosomal subunit protein uL6 (179 aa).

Belongs to the universal ribosomal protein uL6 family. Part of the 50S ribosomal subunit.

Functionally, this protein binds to the 23S rRNA, and is important in its secondary structure. It is located near the subunit interface in the base of the L7/L12 stalk, and near the tRNA binding site of the peptidyltransferase center. The chain is Large ribosomal subunit protein uL6 from Parasynechococcus marenigrum (strain WH8102).